The primary structure comprises 389 residues: 8-amino-7-oxononanoate synthase 2 (389 aa).

Arg-21 is a substrate binding site. Pyridoxal 5'-phosphate is bound at residue 108 to 109 (GY). His-133 lines the substrate pocket. Pyridoxal 5'-phosphate-binding positions include Ser-180, 205–208 (DDAH), and 234–237 (TLSK). N6-(pyridoxal phosphate)lysine is present on Lys-237. Thr-351 contributes to the substrate binding site.

Belongs to the class-II pyridoxal-phosphate-dependent aminotransferase family. BioF subfamily. In terms of assembly, homodimer. The cofactor is pyridoxal 5'-phosphate.

It catalyses the reaction 6-carboxyhexanoyl-[ACP] + L-alanine + H(+) = (8S)-8-amino-7-oxononanoate + holo-[ACP] + CO2. The protein operates within cofactor biosynthesis; biotin biosynthesis. In terms of biological role, catalyzes the decarboxylative condensation of pimeloyl-[acyl-carrier protein] and L-alanine to produce 8-amino-7-oxononanoate (AON), [acyl-carrier protein], and carbon dioxide. The sequence is that of 8-amino-7-oxononanoate synthase 2 (bioF) from Bacillus subtilis (strain 168).